The chain runs to 185 residues: Lectin B4 (185 aa).

The N-linked (GlcNAc...) asparagine glycan is linked to asparagine 48. Residues glutamate 111 and aspartate 113 each coordinate Mn(2+). Positions 113, 115, 117, and 120 each coordinate Ca(2+). Aspartate 120 contributes to the Mn(2+) binding site. Asparagine 122 carries N-linked (GlcNAc...) asparagine glycosylation. Mn(2+) is bound at residue histidine 125.

It belongs to the leguminous lectin family. Homo- or heterotetramer. V.villosa isolectins are composed of either two subunits a and two subunits B (A2B2), four subunits A (A4), or four subunits B (B4). The predominant form, isolectin B4, has no A1 erythrocyte agglutinating activity.

Its function is as follows. N-acetyl-D-galactosamine specific lectin. Binds the Tn determinant (GalNAc-alpha-O-Ser/Thr) of the tumor-associated glycopeptide. Could be required for agglutinating cells such as Tn-exposed erythrocytes. This is Lectin B4 from Vicia villosa (Hairy vetch).